We begin with the raw amino-acid sequence, 209 residues long: Glycerol-3-phosphate acyltransferase (209 aa).

A run of 5 helical transmembrane segments spans residues 13–33, 63–83, 94–114, 127–147, and 151–171; these read ALIA…GLLL, LAAA…LIAQ, PGLL…WLGF, LLGI…SIAF, and YSSL…WILG.

Belongs to the PlsY family. Probably interacts with PlsX.

The protein localises to the cell inner membrane. The catalysed reaction is an acyl phosphate + sn-glycerol 3-phosphate = a 1-acyl-sn-glycero-3-phosphate + phosphate. It functions in the pathway lipid metabolism; phospholipid metabolism. In terms of biological role, catalyzes the transfer of an acyl group from acyl-phosphate (acyl-PO(4)) to glycerol-3-phosphate (G3P) to form lysophosphatidic acid (LPA). This enzyme utilizes acyl-phosphate as fatty acyl donor, but not acyl-CoA or acyl-ACP. This is Glycerol-3-phosphate acyltransferase from Allorhizobium ampelinum (strain ATCC BAA-846 / DSM 112012 / S4) (Agrobacterium vitis (strain S4)).